Consider the following 438-residue polypeptide: Keratin, type I cytoskeletal 18 (438 aa).

Residues 4-83 form a head region; it reads AVSSRSTVVS…TLSGNAVISN (80 aa). The coil 1A stretch occupies residues 84-119; it reads EKETMQDLNDRLSNYLETVRRLENANQQLEIQIREA. An IF rod domain is found at 84-395; sequence EKETMQDLND…HLLGGEDSDT (312 aa). The segment at 120–136 is linker 1; sequence MEKRGPSVRDYSNYEKI. Residues 137–228 form a coil 1B region; sequence IKELRDQIYD…KNHEDEVIAL (92 aa). The segment at 229–252 is linker 12; it reads RNQVNSCGVQVDLDAPKGTDLAEI. The tract at residues 253–393 is coil 2; that stretch reads MATLRAEYEA…YRHLLGGEDS (141 aa). A tail region spans residues 394–438; it reads DTLSLQDALSAMKVSNVQTVQKIVVTTQKLVDGKVVEDSTVTETK.

Belongs to the intermediate filament family. As to quaternary structure, heterotetramer of two type I and two type II keratins. Keratin-18 associates with keratin-8. Phosphorylated. Post-translationally, proteolytically cleaved by caspases during epithelial cell apoptosis. As to expression, expressed at low levels in skin.

When phosphorylated, plays a role in filament reorganization. The chain is Keratin, type I cytoskeletal 18 from Protopterus aethiopicus (Marbled lungfish).